Reading from the N-terminus, the 54-residue chain is uncharacterized protein (54 aa).

The interval 1–54 (MSKKSTPMTKDAASRIQSSAAKSGGDVSSGSFASRAQSAAAINANNTSNSTGKK) is disordered. The span at 28–54 (SSGSFASRAQSAAAINANNTSNSTGKK) shows a compositional bias: low complexity.

This is an uncharacterized protein from Dictyostelium discoideum (Social amoeba).